A 365-amino-acid polypeptide reads, in one-letter code: tRNA/tmRNA (uracil-C(5))-methyltransferase (365 aa).

S-adenosyl-L-methionine contacts are provided by Gln-189, Tyr-217, Asn-222, Glu-238, and Asp-298. Residue Cys-323 is the Nucleophile of the active site. Glu-357 functions as the Proton acceptor in the catalytic mechanism.

The protein belongs to the class I-like SAM-binding methyltransferase superfamily. RNA M5U methyltransferase family. TrmA subfamily.

It carries out the reaction uridine(54) in tRNA + S-adenosyl-L-methionine = 5-methyluridine(54) in tRNA + S-adenosyl-L-homocysteine + H(+). The enzyme catalyses uridine(341) in tmRNA + S-adenosyl-L-methionine = 5-methyluridine(341) in tmRNA + S-adenosyl-L-homocysteine + H(+). Its function is as follows. Dual-specificity methyltransferase that catalyzes the formation of 5-methyluridine at position 54 (m5U54) in all tRNAs, and that of position 341 (m5U341) in tmRNA (transfer-mRNA). The protein is tRNA/tmRNA (uracil-C(5))-methyltransferase of Pasteurella multocida (strain Pm70).